A 187-amino-acid polypeptide reads, in one-letter code: dCTP deaminase (187 aa).

DCTP-binding positions include 110-115 (KSTYAR), 134-136 (TLE), glutamine 155, tyrosine 169, and glutamine 179. The active-site Proton donor/acceptor is the glutamate 136.

It belongs to the dCTP deaminase family. As to quaternary structure, homotrimer.

The catalysed reaction is dCTP + H2O + H(+) = dUTP + NH4(+). It participates in pyrimidine metabolism; dUMP biosynthesis; dUMP from dCTP (dUTP route): step 1/2. In terms of biological role, catalyzes the deamination of dCTP to dUTP. This is dCTP deaminase from Bordetella pertussis (strain Tohama I / ATCC BAA-589 / NCTC 13251).